Here is a 411-residue protein sequence, read N- to C-terminus: Serpin A3-5 (411 aa).

Residues 1–24 (MRAERTSFLLALGLLMAGIRSVHC) form the signal peptide. N-linked (GlcNAc...) asparagine glycans are attached at residues Asn-100, Asn-180, Asn-230, Asn-264, and Asn-318.

It belongs to the serpin family. As to quaternary structure, homodimer.

It localises to the cytoplasmic vesicle. The protein localises to the secretory vesicle. The protein resides in the chromaffin granule. Its subcellular location is the secreted. Functionally, serine protease inhibitor. This is Serpin A3-5 from Bos taurus (Bovine).